Consider the following 564-residue polypeptide: Dihydroxy-acid dehydratase (564 aa).

Asp80 contacts Mg(2+). Cys121 is a binding site for [2Fe-2S] cluster. Residues Asp122 and Lys123 each coordinate Mg(2+). N6-carboxylysine is present on Lys123. Residue Cys194 participates in [2Fe-2S] cluster binding. Glu447 lines the Mg(2+) pocket. Ser473 acts as the Proton acceptor in catalysis.

This sequence belongs to the IlvD/Edd family. In terms of assembly, homodimer. The cofactor is [2Fe-2S] cluster. Mg(2+) is required as a cofactor.

The enzyme catalyses (2R)-2,3-dihydroxy-3-methylbutanoate = 3-methyl-2-oxobutanoate + H2O. The catalysed reaction is (2R,3R)-2,3-dihydroxy-3-methylpentanoate = (S)-3-methyl-2-oxopentanoate + H2O. It participates in amino-acid biosynthesis; L-isoleucine biosynthesis; L-isoleucine from 2-oxobutanoate: step 3/4. It functions in the pathway amino-acid biosynthesis; L-valine biosynthesis; L-valine from pyruvate: step 3/4. Functionally, functions in the biosynthesis of branched-chain amino acids. Catalyzes the dehydration of (2R,3R)-2,3-dihydroxy-3-methylpentanoate (2,3-dihydroxy-3-methylvalerate) into 2-oxo-3-methylpentanoate (2-oxo-3-methylvalerate) and of (2R)-2,3-dihydroxy-3-methylbutanoate (2,3-dihydroxyisovalerate) into 2-oxo-3-methylbutanoate (2-oxoisovalerate), the penultimate precursor to L-isoleucine and L-valine, respectively. In Listeria innocua serovar 6a (strain ATCC BAA-680 / CLIP 11262), this protein is Dihydroxy-acid dehydratase.